A 199-amino-acid polypeptide reads, in one-letter code: MAAVTTDLIRELRERTSAGMMDCKKALEENNADIEKAITWLREKGIAKAAKKAGRETKEGRIVSYIHGNGKIGVLLELNSETDFVSKNEEFEALGKEICMQIAAMNPLYLNEESIPAADLEREKGIMKSQLEAEGKKAEQIEKILPGKIKKYVSEVCLVNQAFFKDDSKTIDDLVKEAIAKFGENITIAHFVRFQVGGL.

Residues 82–85 (TDFV) form an involved in Mg(2+) ion dislocation from EF-Tu region.

It belongs to the EF-Ts family.

Its subcellular location is the cytoplasm. Its function is as follows. Associates with the EF-Tu.GDP complex and induces the exchange of GDP to GTP. It remains bound to the aminoacyl-tRNA.EF-Tu.GTP complex up to the GTP hydrolysis stage on the ribosome. This chain is Elongation factor Ts, found in Leptospira borgpetersenii serovar Hardjo-bovis (strain JB197).